The primary structure comprises 279 residues: L-ascorbate peroxidase 5, peroxisomal (279 aa).

Histidine 39 serves as the catalytic Proton acceptor. Positions 111–134 (PFTPGRKDADSADDGELPNPNEGA) are disordered. Residue histidine 158 coordinates heme b. K(+) contacts are provided by threonine 159, threonine 175, and aspartate 182. The chain crosses the membrane as a helical span at residues 251 to 271 (AVTQQTLGIAVAAAVVIFTIC). The AKR2A-binding sequence (ABS) required for peroxisome membrane targeting motif lies at 272 to 279 (YEASRRGK).

The protein belongs to the peroxidase family. Ascorbate peroxidase subfamily. In terms of assembly, interacts with AKR2A and AKR2B. The cofactor is heme b.

Its subcellular location is the peroxisome membrane. It carries out the reaction L-ascorbate + H2O2 = L-dehydroascorbate + 2 H2O. Plays a key role in hydrogen peroxide removal. This chain is L-ascorbate peroxidase 5, peroxisomal (APX5), found in Arabidopsis thaliana (Mouse-ear cress).